We begin with the raw amino-acid sequence, 292 residues long: 4-hydroxy-tetrahydrodipicolinate synthase (292 aa).

Thr45 serves as a coordination point for pyruvate. Tyr133 acts as the Proton donor/acceptor in catalysis. Catalysis depends on Lys161, which acts as the Schiff-base intermediate with substrate. Ile203 is a pyruvate binding site.

The protein belongs to the DapA family. Homotetramer; dimer of dimers.

It is found in the cytoplasm. It catalyses the reaction L-aspartate 4-semialdehyde + pyruvate = (2S,4S)-4-hydroxy-2,3,4,5-tetrahydrodipicolinate + H2O + H(+). It participates in amino-acid biosynthesis; L-lysine biosynthesis via DAP pathway; (S)-tetrahydrodipicolinate from L-aspartate: step 3/4. Catalyzes the condensation of (S)-aspartate-beta-semialdehyde [(S)-ASA] and pyruvate to 4-hydroxy-tetrahydrodipicolinate (HTPA). This is 4-hydroxy-tetrahydrodipicolinate synthase from Vibrio vulnificus (strain CMCP6).